We begin with the raw amino-acid sequence, 554 residues long: Dihydroxy-acid dehydratase (554 aa).

Asp-78 lines the Mg(2+) pocket. Cys-119 is a [2Fe-2S] cluster binding site. Asp-120 and Lys-121 together coordinate Mg(2+). Lys-121 carries the post-translational modification N6-carboxylysine. Cys-191 contributes to the [2Fe-2S] cluster binding site. Glu-442 lines the Mg(2+) pocket. Ser-468 serves as the catalytic Proton acceptor.

Belongs to the IlvD/Edd family. As to quaternary structure, homodimer. Requires [2Fe-2S] cluster as cofactor. Mg(2+) is required as a cofactor.

The catalysed reaction is (2R)-2,3-dihydroxy-3-methylbutanoate = 3-methyl-2-oxobutanoate + H2O. It catalyses the reaction (2R,3R)-2,3-dihydroxy-3-methylpentanoate = (S)-3-methyl-2-oxopentanoate + H2O. Its pathway is amino-acid biosynthesis; L-isoleucine biosynthesis; L-isoleucine from 2-oxobutanoate: step 3/4. It functions in the pathway amino-acid biosynthesis; L-valine biosynthesis; L-valine from pyruvate: step 3/4. Functions in the biosynthesis of branched-chain amino acids. Catalyzes the dehydration of (2R,3R)-2,3-dihydroxy-3-methylpentanoate (2,3-dihydroxy-3-methylvalerate) into 2-oxo-3-methylpentanoate (2-oxo-3-methylvalerate) and of (2R)-2,3-dihydroxy-3-methylbutanoate (2,3-dihydroxyisovalerate) into 2-oxo-3-methylbutanoate (2-oxoisovalerate), the penultimate precursor to L-isoleucine and L-valine, respectively. The sequence is that of Dihydroxy-acid dehydratase from Thermotoga sp. (strain RQ2).